The sequence spans 439 residues: Gap junction gamma-2 protein (439 aa).

At 1 to 25 the chain is on the cytoplasmic side; it reads MTNMSWSFLTRLLEEIHNHSTFVGK. A helical transmembrane segment spans residues 26–46; sequence VWLTVLVVFRIVLTAVGGEAI. Over 47–78 the chain is Extracellular; it reads YSDEQAKFTCNTRQPGCDNVCYDAFAPLSHVR. Residues 79 to 99 traverse the membrane as a helical segment; it reads FWVFQIVVISTPSVMYLGYAV. Residues 100–216 are Cytoplasmic-facing; the sequence is HRLARASEQE…EGLMRVYVAQ (117 aa). The interval 108–178 is disordered; sequence QERRRALRRR…AEEAGAEEAC (71 aa). A compositionally biased stretch (basic residues) spans 112–125; it reads RALRRRPGPRRAPR. Over residues 140 to 174 the composition is skewed to acidic residues; the sequence is DLGEEEPMLGLGEEEEEEETGAAEGAGEEAEEAGA. The chain crosses the membrane as a helical span at residues 217–237; sequence LVARAAFEVAFLVGQYLLYGF. At 238-265 the chain is on the extracellular side; sequence EVRPFFPCSRQPCPHVVDCFVSRPTEKT. A helical transmembrane segment spans residues 266–286; the sequence is VFLLVMYVVSCLCLLLNLCEM. At 287 to 439 the chain is on the cytoplasmic side; that stretch reads AHLGLGSAQD…SRDGKTTVWI (153 aa). The interval 364 to 439 is disordered; that stretch reads AGDRDRDSSP…SRDGKTTVWI (76 aa). Residue Ser-371 is modified to Phosphoserine. A compositionally biased stretch (low complexity) spans 378 to 393; the sequence is PAASRGPPRAGAPASR.

Belongs to the connexin family. Gamma-type subfamily. A connexon is composed of a hexamer of connexins. Interacts with TJP1. In terms of tissue distribution, expressed in central nervous system, in sciatic nerve and sural nerve. Also detected in skeletal muscles.

The protein resides in the cell membrane. It localises to the cell junction. It is found in the gap junction. One gap junction consists of a cluster of closely packed pairs of transmembrane channels, the connexons, through which materials of low MW diffuse from one cell to a neighboring cell. May play a role in myelination in central and peripheral nervous systems. The chain is Gap junction gamma-2 protein (GJC2) from Homo sapiens (Human).